A 335-amino-acid chain; its full sequence is Methyltransferase pgmE (335 aa).

It belongs to the methyltransferase superfamily.

The protein operates within pigment biosynthesis. Its pathway is secondary metabolite biosynthesis. In terms of biological role, methyltransferase; part of the gene cluster that mediates the biosynthesis of pleosporalin A, ascomycone A, as well as a third cryptic naphthoquinone derived pigment, all responsible for the coloration of conidia. Essential for the production of pleosporalin A, but not the 2 other final products. The pathway begins with the biosynthesis of the cyclized heptaketide 3-acetonyl-1,6,8-trihydroxy-2-naphthaldehyde by the NR-PKS pgmA. The C-6 hydroxyl group is further methylated by the O-methyltransferase pgmB to yield fusarubinaldehyde which is in turn oxidized by the cytochrome P450 monooxygenase pgmC at C-9. The C-1 hydroxyl group is then methylated spontaneously. Although pgmE, pgmD and pgmH are essential for the production of pleosporalin A, it is not the case for the 2 other final products and it remains difficult to assign a specific function to each enzyme. PgmF and pgmG seem not to be involved in pigment biosynthesis although they were regulated by the cluster-specific transcription factor pgmR. This is Methyltransferase pgmE from Aspergillus terreus (strain NIH 2624 / FGSC A1156).